Consider the following 566-residue polypeptide: MPYLLLFALLFALNAPLARAASCPQWSPQQAKAEVAQLRATLARWDEHYHRQGIALVADELYDQSRERLNHLQQCFAVGTSPSPLASARGPVPHPVPHTGVDKLADRQAVARWMAGKSGVWVQPKVDGVAVSLTYQQGRLVQLTSRGDGVNGHDWSRHIPQLDAVTRQLPEALDLHLQGELYLRLSDHVQAKAGSANARGTVAGLLARKQLTGAQGNAIGLFVWGWPHGPEQQAERLAQLARLGFPDSQLYSIAIDTLEDAAHWREHWYRSALPFATDGVILRQSSRPPAERWQAKAPYWIAAWKYPYAQALAEVRDVRFRVGRTGRVTPVLHLLPVTLDDRRITQVSLGSLARWHTLDIRPGDQVAISLAGLTIPRLEQVVHRTVERQAVAAPAPDRYHAHSCWQASEGCDEQFIARLTWLGGKQGLALPRTGPGTWRRLVEAGLVTSMTDWLQLDAERLQQAPGISRLTAAHLLGSFDEARSRPFDQWLRALGVPIGKHLPLTGDWQALASRSAGHWQTVPGIGAKRSRQLVEFFAASEVQAIAAQLAETGIEGFRPPPQRIEQ.

K125 acts as the N6-AMP-lysine intermediate in catalysis.

It belongs to the NAD-dependent DNA ligase family. LigB subfamily.

It carries out the reaction NAD(+) + (deoxyribonucleotide)n-3'-hydroxyl + 5'-phospho-(deoxyribonucleotide)m = (deoxyribonucleotide)n+m + AMP + beta-nicotinamide D-nucleotide.. Its function is as follows. Catalyzes the formation of phosphodiester linkages between 5'-phosphoryl and 3'-hydroxyl groups in double-stranded DNA using NAD as a coenzyme and as the energy source for the reaction. The polypeptide is DNA ligase B (Pseudomonas putida (strain ATCC 700007 / DSM 6899 / JCM 31910 / BCRC 17059 / LMG 24140 / F1)).